The following is a 293-amino-acid chain: Probable adenylate kinase 1, chloroplastic (293 aa).

The transit peptide at 1 to 26 directs the protein to the mitochondrion; sequence MAAVQRLLRASASGGAAAAAAAARRR. 70 to 75 provides a ligand contact to ATP; it reads GVGKGT. Residues 90–119 form an NMP region; sequence ATGDLVRDELASSGPLSVQLAEIVNQGKLV. Residues Thr-91, Arg-96, 117 to 119, 147 to 150, and Gln-154 each bind AMP; these read KLV and GFPR. The LID stretch occupies residues 183–231; it reads GRRICGQCGKNFNLACIDVKGENGLPPIYMAPLLPPNNCMSKLITRADD. Residues Arg-184 and 193–194 contribute to the ATP site; that span reads NF. AMP contacts are provided by Arg-228 and Arg-239.

The protein belongs to the adenylate kinase family.

The protein localises to the mitochondrion. The catalysed reaction is AMP + ATP = 2 ADP. Its function is as follows. Catalyzes the reversible transfer of the terminal phosphate group between ATP and AMP. Plays an important role in cellular energy homeostasis and in adenine nucleotide metabolism. The polypeptide is Probable adenylate kinase 1, chloroplastic (Oryza sativa subsp. japonica (Rice)).